The chain runs to 109 residues: MSERKEGDSGAGVRSAVITQTKPKTQKPAMYRVLLLNDDYTPMEFVVYVLEQFFNKSREDATRIMLHVHQHGVGVCGVYTYEVAETKVAQVVDTARRHQHPLQCTMEKD.

A disordered region spans residues 1–25 (MSERKEGDSGAGVRSAVITQTKPKT).

Belongs to the ClpS family. In terms of assembly, binds to the N-terminal domain of the chaperone ClpA.

Its function is as follows. Involved in the modulation of the specificity of the ClpAP-mediated ATP-dependent protein degradation. This Phenylobacterium zucineum (strain HLK1) protein is ATP-dependent Clp protease adapter protein ClpS.